Here is a 641-residue protein sequence, read N- to C-terminus: tRNA 5-methylaminomethyl-2-thiouridine biosynthesis bifunctional protein MnmC (641 aa).

Residues 1-219 (MTVSKILKQI…PYPICSAAVT (219 aa)) form a tRNA (mnm(5)s(2)U34)-methyltransferase region. The tract at residues 232 to 641 (IGGGVASACL…GKALEVGVEV (410 aa)) is FAD-dependent cmnm(5)s(2)U34 oxidoreductase.

This sequence in the N-terminal section; belongs to the methyltransferase superfamily. tRNA (mnm(5)s(2)U34)-methyltransferase family. The protein in the C-terminal section; belongs to the DAO family. FAD serves as cofactor.

Its subcellular location is the cytoplasm. The enzyme catalyses 5-aminomethyl-2-thiouridine(34) in tRNA + S-adenosyl-L-methionine = 5-methylaminomethyl-2-thiouridine(34) in tRNA + S-adenosyl-L-homocysteine + H(+). In terms of biological role, catalyzes the last two steps in the biosynthesis of 5-methylaminomethyl-2-thiouridine (mnm(5)s(2)U) at the wobble position (U34) in tRNA. Catalyzes the FAD-dependent demodification of cmnm(5)s(2)U34 to nm(5)s(2)U34, followed by the transfer of a methyl group from S-adenosyl-L-methionine to nm(5)s(2)U34, to form mnm(5)s(2)U34. This Shewanella pealeana (strain ATCC 700345 / ANG-SQ1) protein is tRNA 5-methylaminomethyl-2-thiouridine biosynthesis bifunctional protein MnmC.